A 958-amino-acid chain; its full sequence is N-terminal acetyltransferase B complex subunit NAA25 homolog (958 aa).

TPR repeat units lie at residues 7–42 (AVLE…HPNT), 78–111 (ELTL…DPSE), and 320–353 (FFAY…MLEY).

It belongs to the MDM20/NAA25 family. In terms of assembly, component of the N-terminal acetyltransferase B (NatB) complex. Interacts with acer-1. As to expression, expressed in germline and somatic cells.

Its subcellular location is the cytoplasm. The protein resides in the nucleus. It is found in the chromosome. Its function is as follows. Non-catalytic subunit of the NatB complex which catalyzes acetylation of the N-terminal methionine residues of proteins beginning with Met-Asp or Met-Glu. Required for chromosome organization and arrangement; specifically for assembly of the central region components of the synaptonemal complex onto chromosomes during meiosis and for DNA double stranded break formation and repair. Acts downstream of xnd-1 to regulate levels of histone acetylation in germ and somatic cell nuclei by controlling acetyl-CoA production through antagonizing the acetyl-CoA hydrolase activity of acer-1. The protein is N-terminal acetyltransferase B complex subunit NAA25 homolog of Caenorhabditis elegans.